A 51-amino-acid polypeptide reads, in one-letter code: Ribosome biogenesis protein Nop10 (51 aa).

This sequence belongs to the NOP10 family.

Functionally, involved in ribosome biogenesis; more specifically in 18S rRNA pseudouridylation and in cleavage of pre-rRNA. The protein is Ribosome biogenesis protein Nop10 of Methanococcus maripaludis (strain C6 / ATCC BAA-1332).